Consider the following 710-residue polypeptide: MDQQPERREGRSFPERKGQKRKLEEGAAAVEDREISAVSTDGGQALLSEVAAQVSVLNSAFSWQESDRAAAKRATQVLAELAKNEDLVNVIVDGGAVPALMTHLQAPPYNDGDLAEKPYEHEVEKGSAFALGLLAIKPEYQKLIVDKGALPHLVNLLKRNKDGSSSRAVNSVIRRAADAITNLAHENSSIKTRVRVEGGIPPLVELLEFSDSKVQRAAAGALRTLAFKNDDNKNQIVECNALPTLILMLGSEDAAIHYEAVGVIGNLVHSSPHIKKEVLTAGALQPVIGLLSSCCPESQREAALLLGQFASTDSDCKVHIVQRGAVRPLIEMLQSPDVQLKEMSAFALGRLAQDAHNQAGIAHSGGLGPLLKLLDSRNGSLQHNAAFALYGLADNEDNVSDFIRVGGIQKLQDGEFIVQATKDCVSKTLKRLEEKIHGRVLRHLLYLMRISEKSIQRRVALALAHLCSPEDQRTIFIDDNGLELLLGLLGSLNTKQQLDGAAALYKLANKSMALSPVDAAPPSPTQRVYLGEQYVNNATLSDVTFLVEGRTFYAHRICLLASSDAFRAMFDGGYREKDARDIEIPNIKWEVFELMMRFIYTGSVDITNEISKDLLRAADQYLLEGLKRLCEYTIAQDITLESIGDMYELSEAFHAMSLRQACIMFILEHFDKLSSMPWQNELVQRTIPEIREYFCRALTKSTTNLQSLRL.

A disordered region spans residues 1–35; the sequence is MDQQPERREGRSFPERKGQKRKLEEGAAAVEDREI. 9 ARM repeats span residues 85–127, 138–185, 188–227, 230–269, 272–311, 314–353, 355–394, 429–468, and 470–509; these read EDLV…EKGS, PEYQ…NLAH, SSIKTRVRVEGGIPPLVELLEFSDSKVQRAAAGALRTLAF, DDNKNQIVECNALPTLILMLGSEDAAIHYEAVGVIGNLVH, PHIKKEVLTAGALQPVIGLLSSCCPESQREAALLLGQFAS, SDCKVHIVQRGAVRPLIEMLQSPDVQLKEMSAFALGRLAQ, AHNQAGIAHSGGLGPLLKLLDSRNGSLQHNAAFALYGLAD, LKRLEEKIHGRVLRHLLYLMRISEKSIQRRVALALAHLCS, and EDQRTIFIDDNGLELLLGLLGSLNTKQQLDGAAALYKLAN. The region spanning 541-608 is the BTB domain; that stretch reads SDVTFLVEGR…IYTGSVDITN (68 aa).

Interacts with ABF2. Interacts with DUF7/AIP1. In terms of tissue distribution, detected in embryos and most of the vegetative and reproductive organs.

The protein localises to the nucleus. It participates in protein modification; protein ubiquitination. May act as a substrate-specific adapter of an E3 ubiquitin-protein ligase complex (CUL3-RBX1-BTB) which mediates the ubiquitination and subsequent proteasomal degradation of target proteins. Acts as a positive regulator of ABA response via the modulation of the transcriptional activity of ABF2, a transcription factor which controls ABA-dependent gene expression via the G-box-type ABA-responsive elements. Negative regulator of seed germination and young seedling growth. This is ARM REPEAT PROTEIN INTERACTING WITH ABF2 (ARIA) from Arabidopsis thaliana (Mouse-ear cress).